Here is a 196-residue protein sequence, read N- to C-terminus: Putative NADH dehydrogenase/NAD(P)H nitroreductase XCV0587 (196 aa).

This sequence belongs to the nitroreductase family. HadB/RutE subfamily. It depends on FMN as a cofactor.

This chain is Putative NADH dehydrogenase/NAD(P)H nitroreductase XCV0587, found in Xanthomonas euvesicatoria pv. vesicatoria (strain 85-10) (Xanthomonas campestris pv. vesicatoria).